A 202-amino-acid polypeptide reads, in one-letter code: Outer-membrane lipoprotein carrier protein (202 aa).

The signal sequence occupies residues Met-1–Ala-21.

It belongs to the LolA family. Monomer.

It localises to the periplasm. Its function is as follows. Participates in the translocation of lipoproteins from the inner membrane to the outer membrane. Only forms a complex with a lipoprotein if the residue after the N-terminal Cys is not an aspartate (The Asp acts as a targeting signal to indicate that the lipoprotein should stay in the inner membrane). The protein is Outer-membrane lipoprotein carrier protein of Yersinia pestis bv. Antiqua (strain Antiqua).